A 191-amino-acid polypeptide reads, in one-letter code: Peptidyl-tRNA hydrolase (191 aa).

Y16 is a binding site for tRNA. The active-site Proton acceptor is the H21. The tRNA site is built by F66, N68, and N114.

This sequence belongs to the PTH family. Monomer.

It localises to the cytoplasm. The enzyme catalyses an N-acyl-L-alpha-aminoacyl-tRNA + H2O = an N-acyl-L-amino acid + a tRNA + H(+). Its function is as follows. Hydrolyzes ribosome-free peptidyl-tRNAs (with 1 or more amino acids incorporated), which drop off the ribosome during protein synthesis, or as a result of ribosome stalling. In terms of biological role, catalyzes the release of premature peptidyl moieties from peptidyl-tRNA molecules trapped in stalled 50S ribosomal subunits, and thus maintains levels of free tRNAs and 50S ribosomes. In Geotalea daltonii (strain DSM 22248 / JCM 15807 / FRC-32) (Geobacter daltonii), this protein is Peptidyl-tRNA hydrolase.